The following is a 100-amino-acid chain: Urease subunit gamma (100 aa).

The protein belongs to the urease gamma subunit family. As to quaternary structure, heterotrimer of UreA (gamma), UreB (beta) and UreC (alpha) subunits. Three heterotrimers associate to form the active enzyme.

It is found in the cytoplasm. It catalyses the reaction urea + 2 H2O + H(+) = hydrogencarbonate + 2 NH4(+). It participates in nitrogen metabolism; urea degradation; CO(2) and NH(3) from urea (urease route): step 1/1. The chain is Urease subunit gamma from Parasynechococcus marenigrum (strain WH8102).